We begin with the raw amino-acid sequence, 388 residues long: 4-hydroxy-3-methylbut-2-en-1-yl diphosphate synthase (flavodoxin) (388 aa).

Cysteine 280, cysteine 283, cysteine 315, and glutamate 322 together coordinate [4Fe-4S] cluster. Residues 369–388 (MNSEGGPEATSSGSPVVTVS) are disordered. Positions 377-388 (ATSSGSPVVTVS) are enriched in polar residues.

This sequence belongs to the IspG family. [4Fe-4S] cluster serves as cofactor.

The catalysed reaction is (2E)-4-hydroxy-3-methylbut-2-enyl diphosphate + oxidized [flavodoxin] + H2O + 2 H(+) = 2-C-methyl-D-erythritol 2,4-cyclic diphosphate + reduced [flavodoxin]. It functions in the pathway isoprenoid biosynthesis; isopentenyl diphosphate biosynthesis via DXP pathway; isopentenyl diphosphate from 1-deoxy-D-xylulose 5-phosphate: step 5/6. Its function is as follows. Converts 2C-methyl-D-erythritol 2,4-cyclodiphosphate (ME-2,4cPP) into 1-hydroxy-2-methyl-2-(E)-butenyl 4-diphosphate. The sequence is that of 4-hydroxy-3-methylbut-2-en-1-yl diphosphate synthase (flavodoxin) from Mycolicibacterium paratuberculosis (strain ATCC BAA-968 / K-10) (Mycobacterium paratuberculosis).